We begin with the raw amino-acid sequence, 437 residues long: Enolase (437 aa).

Gln162 contacts (2R)-2-phosphoglycerate. Glu204 (proton donor) is an active-site residue. Positions 251, 297, and 324 each coordinate Mg(2+). Residues Lys349, Arg378, Ser379, and Lys400 each coordinate (2R)-2-phosphoglycerate. Lys349 functions as the Proton acceptor in the catalytic mechanism.

Belongs to the enolase family. The cofactor is Mg(2+).

The protein localises to the cytoplasm. It is found in the secreted. Its subcellular location is the cell surface. It catalyses the reaction (2R)-2-phosphoglycerate = phosphoenolpyruvate + H2O. Its pathway is carbohydrate degradation; glycolysis; pyruvate from D-glyceraldehyde 3-phosphate: step 4/5. Its function is as follows. Catalyzes the reversible conversion of 2-phosphoglycerate (2-PG) into phosphoenolpyruvate (PEP). It is essential for the degradation of carbohydrates via glycolysis. The protein is Enolase of Chlorobium limicola (strain DSM 245 / NBRC 103803 / 6330).